Reading from the N-terminus, the 295-residue chain is Thioredoxin-related transmembrane protein 2 (295 aa).

The first 48 residues, 1 to 48 (MAVLAPLIALVYSVPRLSRWLARPYCLLSALLSIAFLLVRKLPPICNG), serve as a signal peptide directing secretion. The Extracellular segment spans residues 49–102 (LPTQREDGNPCDFDWREVEILMFLSAIVMMKNRRSITVEQHVGNIFMFSKVANA). Residues 103–125 (ILFFRLDIRMGLLYLTLCIVFLM) form a helical membrane-spanning segment. A Thioredoxin domain is found at 114 to 269 (LLYLTLCIVF…LYQRAKKHSK (156 aa)). The Cytoplasmic portion of the chain corresponds to 126–295 (TCKPPLYMGP…VPDGENKKDK (170 aa)). Phosphoserine occurs at positions 211 and 243. Positions 266-295 (KHSKGGDMSEEKPVDPAPTTVPDGENKKDK) are disordered. Residues 269–279 (KGGDMSEEKPV) are compositionally biased toward basic and acidic residues. The Di-lysine motif signature appears at 292–295 (KKDK).

As to quaternary structure, monomer. Homodimer; disulfide-linked. Occurs in both reduced and oxidized monomeric form. Oxidative conditions increase homodimerization. Interacts with CANX. Interacts with ATP2A2.

Its subcellular location is the endoplasmic reticulum membrane. The protein localises to the mitochondrion membrane. Endoplasmic reticulum and mitochondria-associated protein that probably functions as a regulator of cellular redox state and thereby regulates protein post-translational modification, protein folding and mitochondrial activity. Indirectly regulates neuronal proliferation, migration, and organization in the developing brain. The protein is Thioredoxin-related transmembrane protein 2 (Tmx2) of Mus musculus (Mouse).